A 417-amino-acid polypeptide reads, in one-letter code: Serine hydroxymethyltransferase (417 aa).

Residues L121 and 125 to 127 (GHL) contribute to the (6S)-5,6,7,8-tetrahydrofolate site. K229 is subject to N6-(pyridoxal phosphate)lysine. 355–357 (SSF) provides a ligand contact to (6S)-5,6,7,8-tetrahydrofolate.

Belongs to the SHMT family. As to quaternary structure, homodimer. Pyridoxal 5'-phosphate serves as cofactor.

It is found in the cytoplasm. It carries out the reaction (6R)-5,10-methylene-5,6,7,8-tetrahydrofolate + glycine + H2O = (6S)-5,6,7,8-tetrahydrofolate + L-serine. The protein operates within one-carbon metabolism; tetrahydrofolate interconversion. It participates in amino-acid biosynthesis; glycine biosynthesis; glycine from L-serine: step 1/1. Its function is as follows. Catalyzes the reversible interconversion of serine and glycine with tetrahydrofolate (THF) serving as the one-carbon carrier. This reaction serves as the major source of one-carbon groups required for the biosynthesis of purines, thymidylate, methionine, and other important biomolecules. Also exhibits THF-independent aldolase activity toward beta-hydroxyamino acids, producing glycine and aldehydes, via a retro-aldol mechanism. This chain is Serine hydroxymethyltransferase, found in Baumannia cicadellinicola subsp. Homalodisca coagulata.